Here is a 33-residue protein sequence, read N- to C-terminus: Glutaminase-asparaginase (33 aa).

An Asparaginase/glutaminase domain is found at asparagine 1–lysine 33. The active-site Acyl-ester intermediate is the threonine 10.

The protein belongs to the asparaginase 1 family. Homotetramer.

The protein resides in the periplasm. It carries out the reaction L-glutamine + H2O = L-glutamate + NH4(+). It catalyses the reaction L-asparagine + H2O = L-aspartate + NH4(+). This Delftia acidovorans (Pseudomonas acidovorans) protein is Glutaminase-asparaginase (ansB).